Reading from the N-terminus, the 297-residue chain is Urease accessory protein UreD 2 (297 aa).

It belongs to the UreD family. In terms of assembly, ureD, UreF and UreG form a complex that acts as a GTP-hydrolysis-dependent molecular chaperone, activating the urease apoprotein by helping to assemble the nickel containing metallocenter of UreC. The UreE protein probably delivers the nickel.

Its subcellular location is the cytoplasm. Functionally, required for maturation of urease via the functional incorporation of the urease nickel metallocenter. The sequence is that of Urease accessory protein UreD 2 from Methylorubrum populi (strain ATCC BAA-705 / NCIMB 13946 / BJ001) (Methylobacterium populi).